We begin with the raw amino-acid sequence, 130 residues long: Small ribosomal subunit protein uS8 (130 aa).

Belongs to the universal ribosomal protein uS8 family. As to quaternary structure, part of the 30S ribosomal subunit. Contacts proteins S5 and S12.

One of the primary rRNA binding proteins, it binds directly to 16S rRNA central domain where it helps coordinate assembly of the platform of the 30S subunit. This chain is Small ribosomal subunit protein uS8, found in Onion yellows phytoplasma (strain OY-M).